The sequence spans 105 residues: Large ribosomal subunit protein uL24 (105 aa).

It belongs to the universal ribosomal protein uL24 family. As to quaternary structure, part of the 50S ribosomal subunit.

One of two assembly initiator proteins, it binds directly to the 5'-end of the 23S rRNA, where it nucleates assembly of the 50S subunit. In terms of biological role, one of the proteins that surrounds the polypeptide exit tunnel on the outside of the subunit. This chain is Large ribosomal subunit protein uL24, found in Hahella chejuensis (strain KCTC 2396).